Here is a 380-residue protein sequence, read N- to C-terminus: uncharacterized protein (380 aa).

Belongs to the metallo-dependent hydrolases superfamily.

This is an uncharacterized protein from Methanocaldococcus jannaschii (strain ATCC 43067 / DSM 2661 / JAL-1 / JCM 10045 / NBRC 100440) (Methanococcus jannaschii).